Consider the following 479-residue polypeptide: Flavonol 3-O-glucosyltransferase UGT71C4 (479 aa).

His-17 (proton acceptor) is an active-site residue. Residue His-17 coordinates an anthocyanidin. Asp-127 functions as the Charge relay in the catalytic mechanism. Thr-150, Ala-350, Gln-352, His-367, Trp-370, Asn-371, Ser-372, and Glu-375 together coordinate UDP-alpha-D-glucose. Ala-390 provides a ligand contact to an anthocyanidin. Glu-391 and Gln-392 together coordinate UDP-alpha-D-glucose.

This sequence belongs to the UDP-glycosyltransferase family.

The enzyme catalyses a flavonol + UDP-alpha-D-glucose = a flavonol 3-O-beta-D-glucoside + UDP + H(+). It catalyses the reaction a 7-O-hydroxy-flavonol + UDP-alpha-D-glucose = a flavonol 7-O-beta-D-glucoside + UDP + H(+). Its function is as follows. Possesses quercetin 3-O-glucosyltransferase and 7-O-glucosyltransferase activities in vitro. Also active in vitro on benzoates and benzoate derivatives. This is Flavonol 3-O-glucosyltransferase UGT71C4 from Arabidopsis thaliana (Mouse-ear cress).